We begin with the raw amino-acid sequence, 364 residues long: Mannose-1-phosphate guanyltransferase (364 aa).

This sequence belongs to the transferase hexapeptide repeat family.

The protein resides in the cytoplasm. The enzyme catalyses alpha-D-mannose 1-phosphate + GTP + H(+) = GDP-alpha-D-mannose + diphosphate. Its pathway is nucleotide-sugar biosynthesis; GDP-alpha-D-mannose biosynthesis; GDP-alpha-D-mannose from alpha-D-mannose 1-phosphate (GTP route): step 1/1. In terms of biological role, involved in cell wall synthesis where it is required for glycosylation. Involved in cell cycle progression through cell-size checkpoint. The chain is Mannose-1-phosphate guanyltransferase (MPG1) from Pichia angusta (Yeast).